A 184-amino-acid chain; its full sequence is Large ribosomal subunit protein uL5 (184 aa).

This sequence belongs to the universal ribosomal protein uL5 family. Component of the large ribosomal subunit. Interacts with Fmr1 to form the RNA-induced silencing complex (RISC), a ribonucleoprotein (RNP) complex involved in translation regulation, other components of the complex are RpL5, Rm62, AGO2 and Dcr-1.

The protein resides in the nucleus. Its subcellular location is the cytoplasm. Component of the ribosome, a large ribonucleoprotein complex responsible for the synthesis of proteins in the cell. The small ribosomal subunit (SSU) binds messenger RNAs (mRNAs) and translates the encoded message by selecting cognate aminoacyl-transfer RNA (tRNA) molecules. The large subunit (LSU) contains the ribosomal catalytic site termed the peptidyl transferase center (PTC), which catalyzes the formation of peptide bonds, thereby polymerizing the amino acids delivered by tRNAs into a polypeptide chain. The nascent polypeptides leave the ribosome through a tunnel in the LSU and interact with protein factors that function in enzymatic processing, targeting, and the membrane insertion of nascent chains at the exit of the ribosomal tunnel. The sequence is that of Large ribosomal subunit protein uL5 (RpL11) from Drosophila melanogaster (Fruit fly).